Here is a 390-residue protein sequence, read N- to C-terminus: Zinc finger protein 121 (390 aa).

A C2H2-type 1; degenerate zinc finger spans residues 88–110 (FEYSDCEEAFVDQSHLQANRITH). A C2H2-type 2; degenerate zinc finger spans residues 116–138 (YEQKQCGRAFTYSTSHAVSVKMH). 9 C2H2-type zinc fingers span residues 144–166 (YECK…MRTH), 172–194 (YECK…VRIH), 200–222 (YQCK…VRIH), 228–250 (YECN…FKTH), 256–278 (FECK…FRIH), 284–306 (YKCK…VKIH), 312–334 (YECK…IRTH), 340–362 (YICK…VRIH), and 368–390 (YICN…LKTH).

Belongs to the krueppel C2H2-type zinc-finger protein family.

It is found in the nucleus. In terms of biological role, may be involved in transcriptional regulation. The protein is Zinc finger protein 121 (ZNF121) of Homo sapiens (Human).